Here is a 355-residue protein sequence, read N- to C-terminus: MLQIAIVGGTGYTGVELIRLLSSHPKVNIKWLTSRSEAGKPVASTFPSLRGISELTYSDLGEDTLSALTQCDVVFFATPHGVAMQQAEALVAAGVKVIDLAADFRLQSLQDFEHWYKHKHACPDLLKQAAYGLPEINREAIKSASVIGNPGCYPTTAILGLKPVIEAQNLASDALIEPRIIIDAKSGVSGAGRQAKLSLNYAETTDNFSAYGVAGHRHLPEIEQGVHVLLQSKFTQNIRFVPHLVPMIRGMFSTIHLGLTEAGCQLDLQAIYEQAYKDEPFIDVLPAGEFPDTRSVRASNRLRIAVHQNNSNKEATILVVQDNLVKGAAGQAVQCMNVMFGFEESLGLNHVPVVP.

C152 is a catalytic residue.

It belongs to the NAGSA dehydrogenase family. Type 1 subfamily.

The protein resides in the cytoplasm. The catalysed reaction is N-acetyl-L-glutamate 5-semialdehyde + phosphate + NADP(+) = N-acetyl-L-glutamyl 5-phosphate + NADPH + H(+). It functions in the pathway amino-acid biosynthesis; L-arginine biosynthesis; N(2)-acetyl-L-ornithine from L-glutamate: step 3/4. Its function is as follows. Catalyzes the NADPH-dependent reduction of N-acetyl-5-glutamyl phosphate to yield N-acetyl-L-glutamate 5-semialdehyde. The protein is N-acetyl-gamma-glutamyl-phosphate reductase of Psychrobacter sp. (strain PRwf-1).